The sequence spans 907 residues: MLEKNYDAASIEQKIAKRWEARGAFKAGMGAKSGTEPFCVMLPPPNVTGSLHMGHALNTTIQDIVVRFERMRGKNVLWQPGMDHAGIATQTVVERQLAECQEPTRQEMGRERFVERIWEWRHETGGVIANQLRRLGVSCDWSRERFTMDEGLSHAVREVFVTLYKQGLIYKDKRLVNWDPKLLTAISDLEVEQREIKGHLWHFRYPLEGKVFDPGDPTTFITVATTRPETMLGDTGIAVNPEDDRYKNLIGQSALLPLVGRRLLIVADGYADPSEGSGAVKITPAHDFNDFEVGKRNNLRLINVFTQKAEIFLHKNEAFFDGLTLSDELKKLVENLDQADRFIARHQIVSLMEEGGYLAAVDDHPHTVPHGDRSGVPIEPFLTDQWYVCAEQLAKPAVEAVRQGRTQFVPDSWKKTYFNWMENIQPWCISRQLWWGHQIPAWYGPDGMVFVEKSEEEALAAAFSHYGEEVELTRDQDVLDTWFSSALWPFSTLGWPNKTTELDTFYPTSLSVTGFDIIFFWVARMMMMGLHFMGEVPFPTVYVHALVRDQKGAKMSKSKGNIIDPLELIDQYSADSLRFTLAVMAAQGRDVKLDPSRIAGYRNFATKLWNATRFAKINGVKHNPAFKPEKVKLALNRWILTELSKTVSAVTTGIENYKFNESADALYRFIWNTLCDWYLELLKPVFQSFNEEAKNEAQACTAWVLDEVYKLLHPFMPHMTEELWCLTETPNMQRKDMLALAQWPEITFLDEAAAADINWLIDVITEIRSVRFEMNIPAGKLAPLVIVEAGEITRERIQRYGALLKKLARIETIDFSDRVLAVSAQMVLGEAIFCLPLGQLIDLEAERARLVKNVSKIEQDIEKISVKLNNPKFVENAKPEIVEAERNKILELRVAQKKISIALERLV.

The short motif at 45 to 55 (PNVTGSLHMGH) is the 'HIGH' region element. Positions 554-558 (KMSKS) match the 'KMSKS' region motif. Lys-557 provides a ligand contact to ATP. The stretch at 838–870 (GQLIDLEAERARLVKNVSKIEQDIEKISVKLNN) forms a coiled coil.

The protein belongs to the class-I aminoacyl-tRNA synthetase family. ValS type 1 subfamily. Monomer.

The protein localises to the cytoplasm. The enzyme catalyses tRNA(Val) + L-valine + ATP = L-valyl-tRNA(Val) + AMP + diphosphate. Catalyzes the attachment of valine to tRNA(Val). As ValRS can inadvertently accommodate and process structurally similar amino acids such as threonine, to avoid such errors, it has a 'posttransfer' editing activity that hydrolyzes mischarged Thr-tRNA(Val) in a tRNA-dependent manner. The sequence is that of Valine--tRNA ligase from Bartonella quintana (strain Toulouse) (Rochalimaea quintana).